Reading from the N-terminus, the 161-residue chain is Urease accessory protein UreE (161 aa).

The interval Arg-138 to Gly-161 is disordered.

Belongs to the UreE family.

The protein resides in the cytoplasm. Its function is as follows. Involved in urease metallocenter assembly. Binds nickel. Probably functions as a nickel donor during metallocenter assembly. The polypeptide is Urease accessory protein UreE (Agrobacterium fabrum (strain C58 / ATCC 33970) (Agrobacterium tumefaciens (strain C58))).